Here is a 732-residue protein sequence, read N- to C-terminus: Catalase-peroxidase (732 aa).

Residues 1 to 26 (MDAKTDDQGGKCPFPHGGGSRGHRNR) form a disordered region. Positions 97–219 (WHSAGTYRTT…LGAVQMGLIY (123 aa)) form a cross-link, tryptophyl-tyrosyl-methioninium (Trp-Tyr) (with M-245). Catalysis depends on histidine 98, which acts as the Proton acceptor. The tryptophyl-tyrosyl-methioninium (Tyr-Met) (with W-97) cross-link spans 219-245 (YVNPEGPNGNPDPVAAAKDIRETFARM). Histidine 260 lines the heme b pocket.

It belongs to the peroxidase family. Peroxidase/catalase subfamily. As to quaternary structure, homodimer or homotetramer. Heme b is required as a cofactor. Formation of the three residue Trp-Tyr-Met cross-link is important for the catalase, but not the peroxidase activity of the enzyme.

The enzyme catalyses H2O2 + AH2 = A + 2 H2O. It carries out the reaction 2 H2O2 = O2 + 2 H2O. Functionally, bifunctional enzyme with both catalase and broad-spectrum peroxidase activity. In Rhodopseudomonas palustris (strain BisB5), this protein is Catalase-peroxidase.